The chain runs to 518 residues: U3 small nucleolar RNA-associated protein 15 homolog (518 aa).

Ala2 carries the post-translational modification N-acetylalanine. 7 WD repeats span residues 36–75 (KEFG…PIKT), 78–117 (RFKD…PLRQ), 120–159 (GHTK…EILT), 162–202 (EHSD…SVLS), 204–242 (EHGQ…QLLV), 246–285 (NHHK…VVHS), and 287–326 (DYAA…KKES). Residue Lys249 forms a Glycyl lysine isopeptide (Lys-Gly) (interchain with G-Cter in SUMO2) linkage.

As to quaternary structure, part of the small subunit (SSU) processome, composed of more than 70 proteins and the RNA chaperone small nucleolar RNA (snoRNA) U3. May be a component of the proposed t-UTP subcomplex of the ribosomal small subunit (SSU) processome containing at least UTP4, WDR43, HEATR1, UTP15, WDR75. Interacts directly with UTP4 and WDR43.

It localises to the nucleus. The protein localises to the nucleolus. Functionally, ribosome biogenesis factor. Involved in nucleolar processing of pre-18S ribosomal RNA. Required for optimal pre-ribosomal RNA transcription by RNA polymerase I. Part of the small subunit (SSU) processome, first precursor of the small eukaryotic ribosomal subunit. During the assembly of the SSU processome in the nucleolus, many ribosome biogenesis factors, an RNA chaperone and ribosomal proteins associate with the nascent pre-rRNA and work in concert to generate RNA folding, modifications, rearrangements and cleavage as well as targeted degradation of pre-ribosomal RNA by the RNA exosome. The sequence is that of U3 small nucleolar RNA-associated protein 15 homolog from Homo sapiens (Human).